A 276-amino-acid polypeptide reads, in one-letter code: Diaminopimelate epimerase (276 aa).

Residues Asn-13, Gln-46, and Asn-66 each coordinate substrate. The active-site Proton donor is the Cys-75. Residues 76–77 (GN), Asn-159, Asn-192, and 210–211 (ER) contribute to the substrate site. The Proton acceptor role is filled by Cys-219. 220–221 (GT) contacts substrate.

The protein belongs to the diaminopimelate epimerase family. In terms of assembly, homodimer.

It is found in the cytoplasm. It catalyses the reaction (2S,6S)-2,6-diaminopimelate = meso-2,6-diaminopimelate. Its pathway is amino-acid biosynthesis; L-lysine biosynthesis via DAP pathway; DL-2,6-diaminopimelate from LL-2,6-diaminopimelate: step 1/1. Functionally, catalyzes the stereoinversion of LL-2,6-diaminopimelate (L,L-DAP) to meso-diaminopimelate (meso-DAP), a precursor of L-lysine and an essential component of the bacterial peptidoglycan. In Tolumonas auensis (strain DSM 9187 / NBRC 110442 / TA 4), this protein is Diaminopimelate epimerase.